A 422-amino-acid chain; its full sequence is Serine hydroxymethyltransferase (422 aa).

(6S)-5,6,7,8-tetrahydrofolate is bound by residues Leu121 and 125–127; that span reads GHL. Lys230 carries the post-translational modification N6-(pyridoxal phosphate)lysine. Residue 355–357 participates in (6S)-5,6,7,8-tetrahydrofolate binding; it reads SPF.

Belongs to the SHMT family. As to quaternary structure, homodimer. The cofactor is pyridoxal 5'-phosphate.

It is found in the cytoplasm. It carries out the reaction (6R)-5,10-methylene-5,6,7,8-tetrahydrofolate + glycine + H2O = (6S)-5,6,7,8-tetrahydrofolate + L-serine. It participates in one-carbon metabolism; tetrahydrofolate interconversion. Its pathway is amino-acid biosynthesis; glycine biosynthesis; glycine from L-serine: step 1/1. In terms of biological role, catalyzes the reversible interconversion of serine and glycine with tetrahydrofolate (THF) serving as the one-carbon carrier. This reaction serves as the major source of one-carbon groups required for the biosynthesis of purines, thymidylate, methionine, and other important biomolecules. Also exhibits THF-independent aldolase activity toward beta-hydroxyamino acids, producing glycine and aldehydes, via a retro-aldol mechanism. The protein is Serine hydroxymethyltransferase of Teredinibacter turnerae (strain ATCC 39867 / T7901).